The primary structure comprises 241 residues: Cobalt transport protein CbiM (241 aa).

The first 23 residues, 1–23, serve as a signal peptide directing secretion; sequence MKKNLTFFMVIALLFTITPNVYA. Transmembrane regions (helical) follow at residues 29 to 49, 66 to 86, 98 to 118, 121 to 141, 160 to 180, and 202 to 222; these read GFLP…FIII, MLLG…IPSV, LSAI…VLIF, ILLA…MGIM, VAVF…TSVQ, and IFSI…VIIF.

This sequence belongs to the CbiM family. In terms of assembly, forms an energy-coupling factor (ECF) transporter complex composed of an ATP-binding protein (A component, CbiO), a transmembrane protein (T component, CbiQ) and 2 possible substrate-capture proteins (S components, CbiM and CbiN) of unknown stoichimetry.

The protein localises to the cell membrane. The protein operates within cofactor biosynthesis; adenosylcobalamin biosynthesis. In terms of biological role, part of the energy-coupling factor (ECF) transporter complex CbiMNOQ involved in cobalt import. In Clostridium tetani (strain Massachusetts / E88), this protein is Cobalt transport protein CbiM.